Here is a 292-residue protein sequence, read N- to C-terminus: Ribosomal protein L11 methyltransferase (292 aa).

Residues Thr-144, Gly-165, Asp-187, and Asn-229 each coordinate S-adenosyl-L-methionine.

It belongs to the methyltransferase superfamily. PrmA family.

It is found in the cytoplasm. It catalyses the reaction L-lysyl-[protein] + 3 S-adenosyl-L-methionine = N(6),N(6),N(6)-trimethyl-L-lysyl-[protein] + 3 S-adenosyl-L-homocysteine + 3 H(+). Its function is as follows. Methylates ribosomal protein L11. This is Ribosomal protein L11 methyltransferase from Saccharophagus degradans (strain 2-40 / ATCC 43961 / DSM 17024).